The following is a 92-amino-acid chain: MSELEKAMVALIDVFHQYSGREGDKHKLKKSELKELINNELSHFLEEIKEQEVVDKVMETLDEDGDGECDFQEFMAFVSMVTTACHEFFEHE.

S2 bears the N-acetylserine mark. 2 EF-hand domains span residues 13-48 (DVFH…LEEI) and 49-84 (KEQE…VTTA). H16 is a Zn(2+) binding site. Ca(2+) contacts are provided by S19 and E22. Position 26 (H26) interacts with Zn(2+). Residues K27, E32, D62, D64, D66, E68, and E73 each contribute to the Ca(2+) site. Zn(2+) is bound by residues H86 and H91.

This sequence belongs to the S-100 family. In terms of assembly, dimer of either two alpha chains, or two beta chains, or one alpha and one beta chain. The S100B dimer binds two molecules of STK38. Interacts with CACYBP in a calcium-dependent manner. Interacts with ATAD3A; this interaction probably occurs in the cytosol prior to ATAD3A mitochondrial targeting. Interacts with S100A6. The S100B dimer interacts with two molecules of CAPZA1. Interacts with AGER. Interacts with PPP5C (via TPR repeats); the interaction is calcium-dependent and modulates PPP5C activity. Interacts with TPPP; this interaction inhibits TPPP dimerization. Interacts with isoform CLSTN3beta of CLSTN3; interaction promotes secretion. As to expression, although predominant among the water-soluble brain proteins, S100 is also found in a variety of other tissues.

It is found in the cytoplasm. Its subcellular location is the nucleus. The protein localises to the secreted. Functionally, small zinc- and- and calcium-binding protein that is highly expressed in astrocytes and constitutes one of the most abundant soluble proteins in brain. Weakly binds calcium but binds zinc very tightly-distinct binding sites with different affinities exist for both ions on each monomer. Physiological concentrations of potassium ion antagonize the binding of both divalent cations, especially affecting high-affinity calcium-binding sites. Acts as a neurotrophic factor that promotes astrocytosis and axonal proliferation. Involved in innervation of thermogenic adipose tissue by acting as an adipocyte-derived neurotrophic factor that promotes sympathetic innervation of adipose tissue. Binds to and initiates the activation of STK38 by releasing autoinhibitory intramolecular interactions within the kinase. Interaction with AGER after myocardial infarction may play a role in myocyte apoptosis by activating ERK1/2 and p53/TP53 signaling. Could assist ATAD3A cytoplasmic processing, preventing aggregation and favoring mitochondrial localization. May mediate calcium-dependent regulation on many physiological processes by interacting with other proteins, such as TPR-containing proteins, and modulating their activity. The protein is Protein S100-B of Rattus norvegicus (Rat).